We begin with the raw amino-acid sequence, 342 residues long: Probable receptor-like protein kinase At4g10390 (342 aa).

A Protein kinase domain is found at 41–336; the sequence is SNFSRLIGSG…IKEIPSLSFL (296 aa). ATP contacts are provided by residues 47–55 and K69; that span reads IGSGGYSSI. D165 functions as the Proton acceptor in the catalytic mechanism. Phosphoserine occurs at positions 169 and 201. Y220 is modified (phosphotyrosine).

The protein belongs to the protein kinase superfamily. Ser/Thr protein kinase family.

It carries out the reaction L-seryl-[protein] + ATP = O-phospho-L-seryl-[protein] + ADP + H(+). The catalysed reaction is L-threonyl-[protein] + ATP = O-phospho-L-threonyl-[protein] + ADP + H(+). This Arabidopsis thaliana (Mouse-ear cress) protein is Probable receptor-like protein kinase At4g10390.